An 84-amino-acid chain; its full sequence is MIKLRLKRYGKKRAASYRIVAMNSRDRRDGRPLEELGYYNPITDETRLHVDAIAKRLKDGAQPTDTVRRILEKASLLEPAKAKA.

It belongs to the bacterial ribosomal protein bS16 family.

The polypeptide is Small ribosomal subunit protein bS16 (Acaryochloris marina (strain MBIC 11017)).